A 489-amino-acid polypeptide reads, in one-letter code: MAYIQASSTQAVVVLLLVLVLTKIYRVYTGPLAHLPGPAISKWTGLVLQKHLFAGNRPRYVQKLHQLYGPIVRISPDELDVSDSAAAKSIHRVASRFYKGRFYEHIGHRSPKTLFSSTDPQFHAYRRRLLGGAMSETSIRQHEPTVAQKVKLCVDQMAREAERRGCIDVFKWWCFLATDTIGELSFGESFRMLEKGEKSQYSRDLELVSTLMIIRTTFPFLSRVAEYVPLPYFKQAAQSGKRMFGYASESIQRYKKHVEMKGXXXXXXXXXXXXXXXXXEGSLTEAEIRLEAGGYIVAGSDTSAISLTYLVWAVCKNPLIRDSLVAEVATLPEDFTDDDVRALPYTRRVIDETLRLYPAVPGALPRAVPPEGATLVDHFIPGGVTVSTQVYSLHRDPKIFPDPDRRFDPDRWIDPTTEMRDSFMPFGGGSRTCIGMHLARMELRLATAHFFRRFTSPTVSTKEGFTDDDMYQHMYFLVSPKGHRCLIDV.

Heme is bound at residue cysteine 433.

This sequence belongs to the cytochrome P450 family. Heme serves as cofactor.

It participates in secondary metabolite biosynthesis. Functionally, cytochrome P450 monooxygenase; part of the gene cluster that mediates the biosynthesis of azaterrilone A and other azaphilones, a class of fungal metabolites characterized by a highly oxygenated pyrano-quinone bicyclic core and exhibiting a broad range of bioactivities. The first step of the pathway begins with the non-reducing polyketide synthase tazA that assembles one acetyl-CoA starter unit, five malonyl-CoA units, and catalyzes a series of Claisen condensations, methylation, PT-mediated cyclization, and finally releases the first hexaketide precursor through the R-domain. The tazA product then undergoes reduction on its terminal ketone and the following pyran-ring formation by yet undetermined enzyme(s). Dehydration and enoyl reduction, possibly involving the trans-enoyl reductase tazE leads to the next intermediate. TazD is predicted as an acetyltransferase and might catalyze the acetylation steps leading to the synthesis of azaterrilone A. Azaterrilone A is not the final product of the taz pathway and both the highly reducing polyketide synthase tazB and the dual enzyme tazHJ catalyze late steps of the pathway, leading to the production of the 2 final stereoisomers that contain additional polyketide modification whose structures have still to be determined. This is Cytochrome P450 monooxygenase tazI from Aspergillus terreus (strain NIH 2624 / FGSC A1156).